A 176-amino-acid polypeptide reads, in one-letter code: Lipocalin-1 (176 aa).

The signal sequence occupies residues 1–19 (MMRALLLAIGLGLVAALQA). Cysteines 80 and 171 form a disulfide.

Belongs to the calycin superfamily. Lipocalin family. In terms of assembly, predominantly monomer. May form homodimer. Interacts with LMBR1L; this interaction mediates the endocytosis of LCN1.

It localises to the secreted. Could play a role in taste reception. Could be necessary for the concentration and delivery of sapid molecules in the gustatory system. Can bind various ligands, with chemical structures ranging from lipids and retinoids to the macrocyclic antibiotic rifampicin and even to microbial siderophores. Exhibits an extremely wide ligand pocket. The polypeptide is Lipocalin-1 (LCN1) (Sus scrofa (Pig)).